A 431-amino-acid polypeptide reads, in one-letter code: 5-methylthioadenosine/S-adenosylhomocysteine deaminase (431 aa).

Residues histidine 68 and histidine 70 each coordinate Zn(2+). Substrate-binding residues include glutamate 97 and histidine 186. Zn(2+) is bound at residue histidine 213. Substrate-binding residues include glutamate 216 and aspartate 301. Aspartate 301 serves as a coordination point for Zn(2+).

It belongs to the metallo-dependent hydrolases superfamily. MTA/SAH deaminase family. The cofactor is Zn(2+).

The catalysed reaction is S-adenosyl-L-homocysteine + H2O + H(+) = S-inosyl-L-homocysteine + NH4(+). It carries out the reaction S-methyl-5'-thioadenosine + H2O + H(+) = S-methyl-5'-thioinosine + NH4(+). In terms of biological role, catalyzes the deamination of 5-methylthioadenosine and S-adenosyl-L-homocysteine into 5-methylthioinosine and S-inosyl-L-homocysteine, respectively. Is also able to deaminate adenosine. This is 5-methylthioadenosine/S-adenosylhomocysteine deaminase from Halothermothrix orenii (strain H 168 / OCM 544 / DSM 9562).